We begin with the raw amino-acid sequence, 324 residues long: NADH-ubiquinone oxidoreductase chain 1 (324 aa).

Helical transmembrane passes span 9–29, 43–63, 77–97, 106–126, 146–166, 177–197, 228–248, 259–279, and 299–319; these read LINPLAYIIPILLATAFLTLI, PNIVGPYGLLQPIADGLKLFI, FLATPTVALALALLMWMPLPL, LGLLFILAISSLTVYTILGSG, ISYEVSLGLILLSMIIFAGGF, TIWLLIPGWPLAFMWYISTLA, LFFLAEYTNILLMNTLSVILF, QISSLSLMMKASMLTVLFLWI, and FLPLTLAIILWHMALPLATTS.

The protein belongs to the complex I subunit 1 family.

It localises to the mitochondrion inner membrane. It carries out the reaction a ubiquinone + NADH + 5 H(+)(in) = a ubiquinol + NAD(+) + 4 H(+)(out). Core subunit of the mitochondrial membrane respiratory chain NADH dehydrogenase (Complex I) that is believed to belong to the minimal assembly required for catalysis. Complex I functions in the transfer of electrons from NADH to the respiratory chain. The immediate electron acceptor for the enzyme is believed to be ubiquinone. The chain is NADH-ubiquinone oxidoreductase chain 1 (MT-ND1) from Scyliorhinus canicula (Small-spotted catshark).